Reading from the N-terminus, the 127-residue chain is UPF0102 protein Geob_1494 (127 aa).

The protein belongs to the UPF0102 family.

The polypeptide is UPF0102 protein Geob_1494 (Geotalea daltonii (strain DSM 22248 / JCM 15807 / FRC-32) (Geobacter daltonii)).